The primary structure comprises 237 residues: NAD-dependent protein deacetylase (237 aa).

In terms of domain architecture, Deacetylase sirtuin-type spans 1–237; sequence MLTTWLTEAK…LEETNRALQA (237 aa). NAD(+)-binding residues include alanine 18, threonine 22, phenylalanine 29, arginine 30, glutamine 95, aspartate 98, and histidine 113. A nicotinamide-binding site is contributed by phenylalanine 29. Aspartate 98 serves as a coordination point for nicotinamide. Histidine 113 serves as the catalytic Proton acceptor. Residues cysteine 121, cysteine 124, cysteine 140, and cysteine 142 each coordinate Zn(2+). NAD(+) contacts are provided by serine 180, serine 181, asparagine 205, and isoleucine 224.

The protein belongs to the sirtuin family. Class U subfamily. The cofactor is Zn(2+).

Its subcellular location is the cytoplasm. It carries out the reaction N(6)-acetyl-L-lysyl-[protein] + NAD(+) + H2O = 2''-O-acetyl-ADP-D-ribose + nicotinamide + L-lysyl-[protein]. In terms of biological role, NAD-dependent protein deacetylase which modulates the activities of several enzymes which are inactive in their acetylated form. The polypeptide is NAD-dependent protein deacetylase (Halalkalibacterium halodurans (strain ATCC BAA-125 / DSM 18197 / FERM 7344 / JCM 9153 / C-125) (Bacillus halodurans)).